A 309-amino-acid polypeptide reads, in one-letter code: GTP cyclohydrolase MptA (309 aa).

Belongs to the GTP cyclohydrolase IV family. Homodimer. It depends on Fe(2+) as a cofactor.

The enzyme catalyses GTP + H2O = 7,8-dihydroneopterin 2',3'-cyclic phosphate + formate + diphosphate + H(+). Its pathway is cofactor biosynthesis; 5,6,7,8-tetrahydromethanopterin biosynthesis. In terms of biological role, converts GTP to 7,8-dihydro-D-neopterin 2',3'-cyclic phosphate, the first intermediate in the biosynthesis of coenzyme methanopterin. This Haloarcula marismortui (strain ATCC 43049 / DSM 3752 / JCM 8966 / VKM B-1809) (Halobacterium marismortui) protein is GTP cyclohydrolase MptA.